The chain runs to 391 residues: Candidapepsin-1 (391 aa).

Positions 1-18 (MFLKNIFIALAIALLVDA) are cleaved as a signal peptide. Positions 19–50 (SPAKRSPGFVTLDFDVIKTPVNATGQEGKVKR) are cleaved as a propeptide — activation peptide. An N-linked (GlcNAc...) asparagine glycan is attached at asparagine 40. Residues 64-377 (YAADITIGSN…DLDDDKISLA (314 aa)) form the Peptidase A1 domain. Aspartate 82 is an active-site residue. Cysteine 97 and cysteine 109 are oxidised to a cystine. Residue aspartate 267 is part of the active site. Cysteine 305 and cysteine 343 are joined by a disulfide.

Belongs to the peptidase A1 family. In terms of processing, O-glycosylated.

The protein localises to the secreted. The enzyme catalyses Preferential cleavage at the carboxyl of hydrophobic amino acids, but fails to cleave 15-Leu-|-Tyr-16, 16-Tyr-|-Leu-17 and 24-Phe-|-Phe-25 of insulin B chain. Activates trypsinogen, and degrades keratin.. The sequence is that of Candidapepsin-1 (SAP1) from Candida albicans (strain WO-1) (Yeast).